Here is a 403-residue protein sequence, read N- to C-terminus: MSSYLFTSESVSEGHPDKVADQISDAVLDAILTQDQRARVACETMVKTGVAIVAGEITTSAWIDLEALTRKVITDIGYDSSDVGFDGATCGVLNLIGKQSPHIAQGVDRKKPEEMGAGDQGLMFGYATNETDSYMPAAIHLSHRLVEQQAKIRKKKNSPLSWLRPDAKSQVTLRYENGVVSAIDAVVLSTQHAPGIKQKDLIEAVREEIIKPVLPAKWLHKGTKFHINPTGKFEIGGPVGDCGLTGRKIIVDTYGGWARHGGGAFSGKDPSKVDRSAAYAARYVAKNVVAAGLADRCEVQVSYAIGVAEPTSISVTTFGTGKISDDKIEKLIRKHFDLRPYGIIKMLDLIHPMYQQTAAYGHFGRKPKEFSYLNGEGETVNATAFSWEKTDRAAALRADAKLK.

H15 serves as a coordination point for ATP. Residue D17 coordinates Mg(2+). Position 43 (E43) interacts with K(+). L-methionine-binding residues include E56 and Q99. Residues 99–109 are flexible loop; the sequence is QSPHIAQGVDR. ATP is bound by residues 166–168, 232–233, D241, 247–248, A264, and K268; these read DAK, KF, and RK. D241 lines the L-methionine pocket. Position 272 (K272) interacts with L-methionine.

This sequence belongs to the AdoMet synthase family. In terms of assembly, homotetramer; dimer of dimers. It depends on Mg(2+) as a cofactor. K(+) is required as a cofactor.

Its subcellular location is the cytoplasm. The catalysed reaction is L-methionine + ATP + H2O = S-adenosyl-L-methionine + phosphate + diphosphate. It participates in amino-acid biosynthesis; S-adenosyl-L-methionine biosynthesis; S-adenosyl-L-methionine from L-methionine: step 1/1. Catalyzes the formation of S-adenosylmethionine (AdoMet) from methionine and ATP. The overall synthetic reaction is composed of two sequential steps, AdoMet formation and the subsequent tripolyphosphate hydrolysis which occurs prior to release of AdoMet from the enzyme. In Stenotrophomonas maltophilia (strain K279a), this protein is S-adenosylmethionine synthase.